The primary structure comprises 504 residues: Protein phosphatase 1J (504 aa).

Disordered regions lie at residues 1-102 (MLNR…RLPW) and 194-217 (PLCL…SPQS). Over residues 14–23 (SSSGTSSQRS) the composition is skewed to low complexity. Thr41 carries the post-translational modification Phosphothreonine. A compositionally biased stretch (polar residues) spans 59–73 (TAETPVSFSRPTFLQ). Phosphoserine is present on residues Ser65 and Ser75. One can recognise a PPM-type phosphatase domain in the interval 103–496 (STGYAEVINA…DDISVFVIPL (394 aa)). Positions 197-217 (LPSTPGTPGVSSPSQLVSPQS) are enriched in low complexity.

This sequence belongs to the PP2C family. As to quaternary structure, interacts with UBE2I/UBC9.

It catalyses the reaction O-phospho-L-seryl-[protein] + H2O = L-seryl-[protein] + phosphate. The catalysed reaction is O-phospho-L-threonyl-[protein] + H2O = L-threonyl-[protein] + phosphate. This Rattus norvegicus (Rat) protein is Protein phosphatase 1J (Ppm1j).